Consider the following 402-residue polypeptide: Choline dehydrogenase (402 aa).

The protein belongs to the iron-containing alcohol dehydrogenase family.

The catalysed reaction is choline + NAD(+) = betaine aldehyde + NADH + H(+). It participates in amine and polyamine biosynthesis; betaine biosynthesis via choline pathway; betaine aldehyde from choline (dehydrogenase route): step 1/1. Its function is as follows. Involved in the biosynthesis of the osmoprotectant glycine betaine from choline. This is Choline dehydrogenase from Bacillus subtilis (strain 168).